The chain runs to 309 residues: Thermolabile glutaminase (309 aa).

Ser-64, Asn-114, Glu-160, Asn-167, Tyr-191, Tyr-243, and Val-261 together coordinate substrate.

It belongs to the glutaminase family. As to quaternary structure, homotetramer.

It carries out the reaction L-glutamine + H2O = L-glutamate + NH4(+). This chain is Thermolabile glutaminase (glsA), found in Rhizobium etli (strain ATCC 51251 / DSM 11541 / JCM 21823 / NBRC 15573 / CFN 42).